The chain runs to 166 residues: Small ribosomal subunit protein uS9 (166 aa).

Positions 135–166 are disordered; that stretch reads KKAGFLTRDPRATERKKYGLKKARKAPQYSKR. Positions 142-151 are enriched in basic and acidic residues; sequence RDPRATERKK. Over residues 152–166 the composition is skewed to basic residues; that stretch reads YGLKKARKAPQYSKR.

Belongs to the universal ribosomal protein uS9 family.

The polypeptide is Small ribosomal subunit protein uS9 (Mycobacterium avium (strain 104)).